Here is a 628-residue protein sequence, read N- to C-terminus: Otolith matrix protein OMM-64 (628 aa).

A signal peptide spans 1–20 (MLSRLLIVPLIFALAGLAIS). Residues 43-628 (KGDKDGGGLT…AAATALAAQS (586 aa)) form a disordered region. The span at 78 to 93 (DSSPDTTDTPDASSSD) shows a compositional bias: low complexity. Polar residues predominate over residues 182 to 214 (TESPGSDSAESPGSDSAESPGSDSTESPGSDST). Composition is skewed to basic and acidic residues over residues 246–266 (ETDKDDDKSDDKSDADAATDK), 276–285 (ELDGKAHAED), and 311–343 (RPEKDVKNDSDDSKDTTEDDKPDKDDKKNRDSA). The N-linked (GlcNAc...) asparagine glycan is linked to Asn318. Composition is skewed to acidic residues over residues 449–462 (DSQEDSVDESEAEP), 477–489 (EPQEDDSEEDTDD), 514–536 (DKEDMDKDDMDKDDMDKDDMDKD), 544–556 (DSVDDQSESDAEP), and 565–578 (DEIDGEETMTPDSE). Residues 613-628 (ASQAADAAATALAAQS) are compositionally biased toward low complexity.

In terms of tissue distribution, specifically expressed in otolith matrix-producing cells.

The protein resides in the secreted. It is found in the extracellular space. It localises to the extracellular matrix. Functionally, calcium-binding component of otoliths, a calcium carbonate structure of the inner ear involved in hearing and balance sensing. Binds calcium. The chain is Otolith matrix protein OMM-64 from Oncorhynchus mykiss (Rainbow trout).